A 544-amino-acid polypeptide reads, in one-letter code: Cannabidiolic acid synthase (544 aa).

The first 28 residues, 1–28, serve as a signal peptide directing secretion; that stretch reads MKCSTFSFWFVCKIIFFFFSFNIQTSIA. The cysteines at positions 37 and 99 are disulfide-linked. 2 N-linked (GlcNAc...) asparagine glycosylation sites follow: asparagine 45 and asparagine 65. The FAD-binding PCMH-type domain occupies 77–251; that stretch reads TTPKPLVIVT…VAWKIRLVAV (175 aa). FAD contacts are provided by residues 109–115 and serine 120; that span reads TRSGGHD. Positions 114–176 form a cross-link, 6-(S-cysteinyl)-8alpha-(pros-histidyl)-FAD (His-Cys); that stretch reads HDSEGMSYIS…ENLSLAAGYC (63 aa). Asparagine 168 carries N-linked (GlcNAc...) asparagine glycosylation. FAD-binding positions include cysteine 176, 180–184, tyrosine 190, glutamate 236, and isoleucine 241; that span reads CAGGH. Histidine 291 contributes to the cannabigerolate binding site. N-linked (GlcNAc...) asparagine glycans are attached at residues asparagine 296, asparagine 304, and asparagine 328. Tyrosine 416 and glutamate 441 together coordinate cannabigerolate. 480-482 provides a ligand contact to FAD; it reads YLN. Tyrosine 483 serves as the catalytic Proton acceptor. A glycan (N-linked (GlcNAc...) asparagine) is linked at asparagine 498.

The protein belongs to the oxygen-dependent FAD-linked oxidoreductase family. As to quaternary structure, monomer. FAD serves as cofactor. In terms of processing, glycosylated. Post-translationally, the FAD cofactor is bound via a bicovalent 6-S-cysteinyl, 8alpha-N1-histidyl FAD linkage. Expressed in young leaves.

It is found in the secreted. The protein resides in the extracellular space. Its subcellular location is the apoplast. The catalysed reaction is cannabigerolate + O2 = cannabidiolate + H2O2. The protein operates within secondary metabolite biosynthesis; terpenoid biosynthesis. Inhibited by Hg(2+). Functionally, oxidoreductase involved in the biosynthesis of cannabinoids-related terpenophenolic natural products, which have pharmacological activity. Catalyzes the stereoselective oxidative cyclization of the monoterpene moiety in cannabigerolic acid (CBGA), producing cannabidiolate (CBDA), the major cannabioid in fiber-type Cannabis plants. Can also use cannabinerolic acid as substrate, but not cannabigerol or cannabinerol. This Cannabis sativa (Hemp) protein is Cannabidiolic acid synthase.